The sequence spans 473 residues: Probable ribonuclease FAU-1 (473 aa).

The protein belongs to the FAU-1 family.

Functionally, probable RNase involved in rRNA stability through maturation and/or degradation of precursor rRNAs. Binds to RNA in loop regions with AU-rich sequences. The protein is Probable ribonuclease FAU-1 of Hyperthermus butylicus (strain DSM 5456 / JCM 9403 / PLM1-5).